We begin with the raw amino-acid sequence, 491 residues long: Malonate-semialdehyde dehydrogenase 1 (491 aa).

Ala-154, Phe-156, Lys-180, Glu-183, Arg-184, Ser-233, and Thr-255 together coordinate NAD(+). Catalysis depends on Cys-288, which acts as the Nucleophile. Glu-386 provides a ligand contact to NAD(+).

It belongs to the aldehyde dehydrogenase family. IolA subfamily. Homotetramer.

The catalysed reaction is 3-oxopropanoate + NAD(+) + CoA + H2O = hydrogencarbonate + acetyl-CoA + NADH + H(+). It carries out the reaction 2-methyl-3-oxopropanoate + NAD(+) + CoA + H2O = propanoyl-CoA + hydrogencarbonate + NADH + H(+). The protein operates within polyol metabolism; myo-inositol degradation into acetyl-CoA; acetyl-CoA from myo-inositol: step 7/7. In terms of biological role, catalyzes the oxidation of malonate semialdehyde (MSA) and methylmalonate semialdehyde (MMSA) into acetyl-CoA and propanoyl-CoA, respectively. Is involved in a myo-inositol catabolic pathway. Bicarbonate, and not CO2, is the end-product of the enzymatic reaction. This Shouchella clausii (strain KSM-K16) (Alkalihalobacillus clausii) protein is Malonate-semialdehyde dehydrogenase 1.